We begin with the raw amino-acid sequence, 161 residues long: Small ribosomal subunit protein bS6 (161 aa).

The segment at 107–161 is disordered; that stretch reads KGDERERGFRGPKPAGRFESGRGGAGGARRGYDDREEFRARNEREDGRDTDGEAE. The span at 136-161 shows a compositional bias: basic and acidic residues; the sequence is RGYDDREEFRARNEREDGRDTDGEAE.

Belongs to the bacterial ribosomal protein bS6 family.

Its function is as follows. Binds together with bS18 to 16S ribosomal RNA. This is Small ribosomal subunit protein bS6 from Gluconacetobacter diazotrophicus (strain ATCC 49037 / DSM 5601 / CCUG 37298 / CIP 103539 / LMG 7603 / PAl5).